The sequence spans 507 residues: Fumarate hydratase, mitochondrial (507 aa).

Residues 1 to 41 (MYRALRLLARSRRLLRVPSAGAAVSGEATTLPRCAPNVARM) constitute a mitochondrion transit peptide. Residues Lys58, Lys63, and Lys77 each carry the N6-acetyllysine; alternate modification. N6-succinyllysine; alternate is present on residues Lys58, Lys63, and Lys77. Thr82 carries the post-translational modification Phosphothreonine. Lys112 and Lys119 each carry N6-acetyllysine; alternate. An N6-succinyllysine; alternate mark is found at Lys112 and Lys119. Residues 142–144 (SGT), 173–176 (HPND), and 183–185 (SSN) each bind substrate. An N6-acetyllysine modification is found at Lys210. At Lys220 the chain carries N6-acetyllysine; alternate. At Lys220 the chain carries N6-succinyllysine; alternate. Position 231 (Thr231) interacts with substrate. His232 functions as the Proton donor/acceptor in the catalytic mechanism. The residue at position 233 (Thr233) is a Phosphothreonine. Lys289 carries the N6-acetyllysine; alternate modification. N6-succinyllysine; alternate is present on Lys289. The active site involves Ser362. Substrate is bound by residues Ser363 and 368 to 370 (KVN). A Phosphoserine modification is found at Ser363. Residues Lys464 and Lys470 each carry the N6-succinyllysine modification. Lys499 carries the N6-acetyllysine modification.

Belongs to the class-II fumarase/aspartase family. Fumarase subfamily. As to quaternary structure, homotetramer. Interacts with H2AZ1. In terms of processing, phosphorylation at Thr-233 by PRKDC in response to DNA damage promotes translocation to the nucleus and recruitment to DNA double-strand breaks (DSBs).

It localises to the mitochondrion. The protein resides in the cytoplasm. It is found in the cytosol. Its subcellular location is the nucleus. The protein localises to the chromosome. It carries out the reaction (S)-malate = fumarate + H2O. Its pathway is carbohydrate metabolism; tricarboxylic acid cycle; (S)-malate from fumarate: step 1/1. Functionally, catalyzes the reversible stereospecific interconversion of fumarate to L-malate. Experiments in different species have demonstrated that specific isoforms of this protein act in defined pathways and favor one direction over the other. In terms of biological role, catalyzes the hydration of fumarate to L-malate in the tricarboxylic acid (TCA) cycle to facilitate a transition step in the production of energy in the form of NADH. Its function is as follows. Catalyzes the dehydration of L-malate to fumarate. Fumarate metabolism in the cytosol plays a role during urea cycle and arginine metabolism; fumarate being a by-product of the urea cycle and amino-acid catabolism. Also plays a role in DNA repair by promoting non-homologous end-joining (NHEJ). In response to DNA damage and phosphorylation by PRKDC, translocates to the nucleus and accumulates at DNA double-strand breaks (DSBs): acts by catalyzing formation of fumarate, an inhibitor of KDM2B histone demethylase activity, resulting in enhanced dimethylation of histone H3 'Lys-36' (H3K36me2). This Mus musculus (Mouse) protein is Fumarate hydratase, mitochondrial.